A 141-amino-acid chain; its full sequence is Nucleoside diphosphate kinase (141 aa).

The ATP site is built by K11, F59, R87, T93, R104, and N114. Catalysis depends on H117, which acts as the Pros-phosphohistidine intermediate.

Belongs to the NDK family. As to quaternary structure, homotetramer. Mg(2+) is required as a cofactor.

It localises to the cytoplasm. It carries out the reaction a 2'-deoxyribonucleoside 5'-diphosphate + ATP = a 2'-deoxyribonucleoside 5'-triphosphate + ADP. It catalyses the reaction a ribonucleoside 5'-diphosphate + ATP = a ribonucleoside 5'-triphosphate + ADP. Major role in the synthesis of nucleoside triphosphates other than ATP. The ATP gamma phosphate is transferred to the NDP beta phosphate via a ping-pong mechanism, using a phosphorylated active-site intermediate. The sequence is that of Nucleoside diphosphate kinase from Cupriavidus necator (strain ATCC 17699 / DSM 428 / KCTC 22496 / NCIMB 10442 / H16 / Stanier 337) (Ralstonia eutropha).